We begin with the raw amino-acid sequence, 162 residues long: Large ribosomal subunit protein uL11 (162 aa).

A disordered region spans residues 1–27 (MAGTIEVLVPGGEANPGPPLGPELGPT).

The protein belongs to the universal ribosomal protein uL11 family. Part of the 50S ribosomal subunit. Forms part of the ribosomal stalk which helps the ribosome interact with GTP-bound translation factors. Forms a heptameric L10(L12)2(L12)2(L12)2 complex, where L10 forms an elongated spine to which 3 L12 dimers bind in a sequential fashion.

In terms of biological role, forms part of the ribosomal stalk which helps the ribosome interact with GTP-bound translation factors. This is Large ribosomal subunit protein uL11 from Haloarcula marismortui (strain ATCC 43049 / DSM 3752 / JCM 8966 / VKM B-1809) (Halobacterium marismortui).